A 126-amino-acid polypeptide reads, in one-letter code: Large ribosomal subunit protein bL20 (126 aa).

This sequence belongs to the bacterial ribosomal protein bL20 family.

Binds directly to 23S ribosomal RNA and is necessary for the in vitro assembly process of the 50S ribosomal subunit. It is not involved in the protein synthesizing functions of that subunit. This is Large ribosomal subunit protein bL20 from Parafrankia sp. (strain EAN1pec).